The primary structure comprises 760 residues: Penicillin-binding protein 1B (760 aa).

Residues 1 to 8 (MFFNFKKY) are Cytoplasmic-facing. The helical; Signal-anchor for type II membrane protein transmembrane segment at 9-29 (FLIKVFFFVLILTLCYGLYLY) threads the bilayer. Topologically, residues 30–760 (VKINRFINGK…NFLFWLKNLF (731 aa)) are extracellular. Residues 136-308 (FRLEPKLIAM…SLYSPWTNPN (173 aa)) form a transglycosylase region. Glu174 acts as the Proton donor; for transglycosylase activity in catalysis. A transpeptidase region spans residues 392–684 (EQAVKIEIPI…SSGAMQIYKR (293 aa)). The active-site Acyl-ester intermediate; for transpeptidase activity is Ser451.

It in the N-terminal section; belongs to the glycosyltransferase 51 family. The protein in the C-terminal section; belongs to the transpeptidase family.

The protein resides in the cell membrane. The catalysed reaction is [GlcNAc-(1-&gt;4)-Mur2Ac(oyl-L-Ala-gamma-D-Glu-L-Lys-D-Ala-D-Ala)](n)-di-trans,octa-cis-undecaprenyl diphosphate + beta-D-GlcNAc-(1-&gt;4)-Mur2Ac(oyl-L-Ala-gamma-D-Glu-L-Lys-D-Ala-D-Ala)-di-trans,octa-cis-undecaprenyl diphosphate = [GlcNAc-(1-&gt;4)-Mur2Ac(oyl-L-Ala-gamma-D-Glu-L-Lys-D-Ala-D-Ala)](n+1)-di-trans,octa-cis-undecaprenyl diphosphate + di-trans,octa-cis-undecaprenyl diphosphate + H(+). It catalyses the reaction Preferential cleavage: (Ac)2-L-Lys-D-Ala-|-D-Ala. Also transpeptidation of peptidyl-alanyl moieties that are N-acyl substituents of D-alanine.. Its pathway is cell wall biogenesis; peptidoglycan biosynthesis. Cell wall formation. Synthesis of cross-linked peptidoglycan from the lipid intermediates. The enzyme has a penicillin-insensitive transglycosylase N-terminal domain (formation of linear glycan strands) and a penicillin-sensitive transpeptidase C-terminal domain (cross-linking of the peptide subunits). The sequence is that of Penicillin-binding protein 1B (mrcB) from Buchnera aphidicola subsp. Acyrthosiphon pisum (strain APS) (Acyrthosiphon pisum symbiotic bacterium).